A 316-amino-acid chain; its full sequence is Retinol dehydrogenase 12 (316 aa).

An NADP(+)-binding site is contributed by 46 to 52 (GANTGIG). Ser-175 contributes to the substrate binding site. Tyr-200 serves as the catalytic Proton acceptor.

It belongs to the short-chain dehydrogenases/reductases (SDR) family. Expressed in the inner segments of the photoreceptor in retina.

It catalyses the reaction all-trans-retinol + NADP(+) = all-trans-retinal + NADPH + H(+). The enzyme catalyses 11-cis-retinol + NADP(+) = 11-cis-retinal + NADPH + H(+). It carries out the reaction 9-cis-retinol + NADP(+) = 9-cis-retinal + NADPH + H(+). The catalysed reaction is a 4-hydroxynonen-1-ol + NADP(+) = a 4-hydroxynonenal + NADPH + H(+). It catalyses the reaction (E)-non-2-en-1-ol + NADP(+) = (E)-non-2-enal + NADPH + H(+). The enzyme catalyses (Z)-non-6-en-1-ol + NADP(+) = (Z)-non-6-enal + NADPH + H(+). It carries out the reaction nonan-1-ol + NADP(+) = nonanal + NADPH + H(+). Its pathway is cofactor metabolism; retinol metabolism. Its function is as follows. Retinoids dehydrogenase/reductase with a clear preference for NADP. Displays high activity towards 9-cis, 11-cis and all-trans-retinal. Shows very weak activity toward 13-cis-retinol. Also exhibits activity, albeit with lower affinity than for retinaldehydes, towards lipid peroxidation products (C9 aldehydes) such as 4-hydroxynonenal and trans-2-nonenal. Plays an important function in photoreceptor cells to detoxify 4-hydroxynonenal and potentially other toxic aldehyde products resulting from lipid peroxidation. Has no dehydrogenase activity towards steroids. This chain is Retinol dehydrogenase 12 (Rdh12), found in Mus musculus (Mouse).